Here is a 345-residue protein sequence, read N- to C-terminus: Protein GAMETE CELL DEFECTIVE 1, mitochondrial (345 aa).

Residues 1 to 43 constitute a mitochondrion transit peptide; that stretch reads MLALRKTLLHGRLPAAPPAAAAAAIASRIPALLRRLSSSPGDG. The tract at residues 36 to 82 is disordered; sequence LSSSPGDGQGGDEWGSSWSTGITKEHFDGSDAAVGRPVTSPSKPVSP.

The protein resides in the mitochondrion. Essential for fertility (male and female gametophyte functions and development). Required for the integrity of female gametic mitochondria. Involved in embryo apical-basal patterning, and particularly dorsal-ventral patterning, during early embryogenesis, and endosperm free nucleus positioning and development as well as early endosperm development, probably by modulating the expression pattern of related genes (e.g. AL1, MYB3/AL2, CYP78A13/GE, PNH1, HAZ1, MPK6 and OSH1). Has function in triggering of endosperm programmed cell death (PCD) leading to syncytial endosperm cellularization and starchy endosperm cell maturation. Implicated in central vacuole dynamics necessary for microspore development leading to pollen production, and for pollen development and germination. The sequence is that of Protein GAMETE CELL DEFECTIVE 1, mitochondrial from Oryza sativa subsp. indica (Rice).